The primary structure comprises 88 residues: Small ribosomal subunit protein bS20 (88 aa).

Belongs to the bacterial ribosomal protein bS20 family. Part of the 30S ribosomal subunit.

Its function is as follows. Binds directly to 16S ribosomal RNA. The polypeptide is Small ribosomal subunit protein bS20 (rpsT) (Bacillus subtilis (strain 168)).